We begin with the raw amino-acid sequence, 493 residues long: Glycerol kinase (493 aa).

ADP is bound at residue T13. The ATP site is built by T13, T14, and S15. T13 serves as a coordination point for sn-glycerol 3-phosphate. R17 is a binding site for ADP. R83, E84, Y135, and D244 together coordinate sn-glycerol 3-phosphate. Glycerol contacts are provided by R83, E84, Y135, D244, and Q245. Residues T266 and G309 each contribute to the ADP site. T266, G309, Q313, and G410 together coordinate ATP. ADP-binding residues include G410 and N414.

This sequence belongs to the FGGY kinase family.

It carries out the reaction glycerol + ATP = sn-glycerol 3-phosphate + ADP + H(+). It participates in polyol metabolism; glycerol degradation via glycerol kinase pathway; sn-glycerol 3-phosphate from glycerol: step 1/1. Its activity is regulated as follows. Inhibited by fructose 1,6-bisphosphate (FBP). Its function is as follows. Key enzyme in the regulation of glycerol uptake and metabolism. Catalyzes the phosphorylation of glycerol to yield sn-glycerol 3-phosphate. The sequence is that of Glycerol kinase from Shewanella pealeana (strain ATCC 700345 / ANG-SQ1).